Consider the following 351-residue polypeptide: S-adenosylmethionine:tRNA ribosyltransferase-isomerase (351 aa).

The protein belongs to the QueA family. Monomer.

Its subcellular location is the cytoplasm. It carries out the reaction 7-aminomethyl-7-carbaguanosine(34) in tRNA + S-adenosyl-L-methionine = epoxyqueuosine(34) in tRNA + adenine + L-methionine + 2 H(+). The protein operates within tRNA modification; tRNA-queuosine biosynthesis. In terms of biological role, transfers and isomerizes the ribose moiety from AdoMet to the 7-aminomethyl group of 7-deazaguanine (preQ1-tRNA) to give epoxyqueuosine (oQ-tRNA). The sequence is that of S-adenosylmethionine:tRNA ribosyltransferase-isomerase from Roseobacter denitrificans (strain ATCC 33942 / OCh 114) (Erythrobacter sp. (strain OCh 114)).